The primary structure comprises 360 residues: Cyclin-dependent kinase 10 (360 aa).

The 285-residue stretch at 39–323 (FEKLNRIGEG…AGDCLESSYF (285 aa)) folds into the Protein kinase domain. Residues 45–53 (IGEGTYGIV) and lysine 68 contribute to the ATP site. The Proton acceptor role is filled by aspartate 163. Position 196 is a phosphothreonine (threonine 196). Residues 334–360 (LMPTFPHHRNKRAAPATSEGQSKRCKP) are disordered.

This sequence belongs to the protein kinase superfamily. CMGC Ser/Thr protein kinase family. CDC2/CDKX subfamily. Heterodimer with CCNQ, the interaction is required for kinase activity. Interacts with ETS2. Interacts with PRK2.

The protein resides in the cytoplasm. The protein localises to the cytoskeleton. It localises to the cilium basal body. The catalysed reaction is L-seryl-[protein] + ATP = O-phospho-L-seryl-[protein] + ADP + H(+). It carries out the reaction L-threonyl-[protein] + ATP = O-phospho-L-threonyl-[protein] + ADP + H(+). Functionally, cyclin-dependent kinase that phosphorylates the transcription factor ETS2 (in vitro) and positively controls its proteasomal degradation (in cells). Involved in the regulation of actin cytoskeleton organization through the phosphorylation of actin dynamics regulators such as PKN2. Is a negative regulator of ciliogenesis through phosphorylation of PKN2 and promotion of RhoA signaling. This Homo sapiens (Human) protein is Cyclin-dependent kinase 10 (CDK10).